The sequence spans 5104 residues: Malformin synthetase mlfA (5104 aa).

The tract at residues 225–616 is adenylation 1; that stretch reads ERHAVNRPHS…CGRADTQVKL (392 aa). A Carrier 1 domain is found at 757–830; it reads SRLEQEIQLA…EAASLAEVQE (74 aa). Position 791 is an O-(pantetheine 4'-phosphoryl)serine (Ser791). The tract at residues 868 to 1299 is condensation 1; it reads EDVFPCTTMQ…ALNTLSLLQA (432 aa). The interval 1327-1716 is adenylation 2; that stretch reads DRWVTRQPEG…GRKDTQVKLR (390 aa). The region spanning 1854–1931 is the Carrier 2 domain; the sequence is TPASELERTL…QLAAEFGGPA (78 aa). Ser1891 carries the O-(pantetheine 4'-phosphoryl)serine modification. Disordered stretches follow at residues 1928-1961 and 1998-2025; these read GGPA…DGVD and TNKT…KVDS. Composition is skewed to low complexity over residues 1934–1958 and 2003–2013; these read SASS…STND and SVSSSSSSSSS. A condensation 2 region spans residues 2066 to 2481; that stretch reads EDIYPATPLQ…TVSYSDKEAL (416 aa). The interval 2504-2896 is adenylation 3; that stretch reads VRTPHAPAVC…IGRRDGQLKL (393 aa). One can recognise a Carrier 3 domain in the interval 3032 to 3108; sequence RPVTSQEREM…QLICHLNTIR (77 aa). Residue Ser3069 is modified to O-(pantetheine 4'-phosphoryl)serine. 2 condensation regions span residues 3125-3590 and 3611-4029; these read WVAL…TYDQ and NIYP…EQLV. The adenylation 4 stretch occupies residues 4054–4444; the sequence is HSSREAVCAW…VGRKDNQIKF (391 aa). The Carrier 4 domain maps to 4578 to 4654; the sequence is MPSTAAERKM…DLSDQARSLI (77 aa). At Ser4615 the chain carries O-(pantetheine 4'-phosphoryl)serine. Positions 4691–5018 are condensation 5; sequence DVLPTTSFQR…LQTIVQHQNN (328 aa).

Belongs to the NRP synthetase family.

It functions in the pathway secondary metabolite biosynthesis. Its function is as follows. Nonribosomal peptide synthetase; part of the gene cluster that mediates the biosynthesis of malformins, cyclic pentapeptides with a disulfide bond between 2 consecutive cysteins, that show potential anti-tumor as well as antimalarial and antitrypanosomal properties. The nonribosomal peptide synthetase mlfA is responsible of the formation of the cyclic pentapeptide. The malformin biosynthesis clusters in malformin-producing fungi also contain enzymes involved in the formation of the disulfide bond between the two consecutive cysteins within malformins, in addition to additional tailoring enzymes such as methyltransferases or oxidoreductases. They are also composed of up to 4 major facilitator superfamily transporters, and transcription factors probably involved in the regulation of the expression of those clusters. In Aspergillus vadensis (strain CBS 113365 / IMI 142717 / IBT 24658), this protein is Malformin synthetase mlfA.